A 123-amino-acid chain; its full sequence is Small ribosomal subunit protein uS12cz/uS12cy/uS12cx/uS12w (123 aa).

Residues 1–13 (MPTSNQLLRNSRQ) show a composition bias toward polar residues. The interval 1–30 (MPTSNQLLRNSRQPVRKTKKTPALRGCPQR) is disordered. Residues 14–30 (PVRKTKKTPALRGCPQR) are compositionally biased toward basic residues.

The protein belongs to the universal ribosomal protein uS12 family. Part of the 30S ribosomal subunit.

It localises to the plastid. The protein resides in the chloroplast. With S4 and S5 plays an important role in translational accuracy. Located at the interface of the 30S and 50S subunits. The polypeptide is Small ribosomal subunit protein uS12cz/uS12cy/uS12cx/uS12w (rps12-A) (Pelargonium hortorum (Common geranium)).